Here is a 268-residue protein sequence, read N- to C-terminus: Undecaprenyl-diphosphatase (268 aa).

8 helical membrane passes run 1–21 (MSLIYLVVLALVQGITEFLPI), 39–59 (QGPLIDVMAHAGSLLAVLVYF), 85–105 (ALLVAASMPPIIIVAGALVAF), 110–130 (ALRSPRVIAIATLAFALPLWL), 144–164 (MSFKHAALIGIAQLFALIPGA), 187–207 (FSMLMAIPVIAAFGLVSLIEL), 221–241 (DGLIVAGLSFVTAWAAIAVLM), and 247–267 (IGFLPFALYRVGLGLALLVFF).

Belongs to the UppP family.

Its subcellular location is the cell inner membrane. The catalysed reaction is di-trans,octa-cis-undecaprenyl diphosphate + H2O = di-trans,octa-cis-undecaprenyl phosphate + phosphate + H(+). Functionally, catalyzes the dephosphorylation of undecaprenyl diphosphate (UPP). Confers resistance to bacitracin. This chain is Undecaprenyl-diphosphatase, found in Maricaulis maris (strain MCS10) (Caulobacter maris).